The chain runs to 634 residues: Chaperone protein HtpG (634 aa).

An a; substrate-binding region spans residues 1–342 (MTVDTDKQTL…SSDLSLNVSR (342 aa)). Residues 343-559 (EILQSGPVVD…QGDLGLQMRQ (217 aa)) form a b region. The interval 560-634 (LLEASGQAVP…LNKLLLELSV (75 aa)) is c.

It belongs to the heat shock protein 90 family. In terms of assembly, homodimer.

It is found in the cytoplasm. Its function is as follows. Molecular chaperone. Has ATPase activity. The sequence is that of Chaperone protein HtpG from Xanthomonas oryzae pv. oryzae (strain MAFF 311018).